The following is a 163-amino-acid chain: MITQIRVDDRLVHGQVAVVWTKELNAPLLVVANDEAAKNEITQMTLKMAVPNGMKLLIRSVEDSIKLFNDPRATDKRIFVIVNSVKDACAIAKEVPDLEAVNVANVGRFDKSDPASKVKVTPSLLLNPEEMAAAKELVSLPELDVFNQVLPSNTKVHLSQLVN.

The PTS EIIB type-4 domain maps to 1-163; sequence MITQIRVDDR…TKVHLSQLVN (163 aa). The active-site Pros-phosphohistidine intermediate is the His13.

The protein localises to the cytoplasm. Its function is as follows. The phosphoenolpyruvate-dependent sugar phosphotransferase system (sugar PTS), a major carbohydrate active -transport system, catalyzes the phosphorylation of incoming sugar substrates concomitantly with their translocation across the cell membrane. This Streptococcus pyogenes serotype M6 (strain ATCC BAA-946 / MGAS10394) protein is Probable phosphotransferase enzyme IIB component M6_Spy0801.